The sequence spans 393 residues: NADH-quinone oxidoreductase subunit D (393 aa).

The protein belongs to the complex I 49 kDa subunit family. NDH-1 is composed of 14 different subunits. Subunits NuoB, C, D, E, F, and G constitute the peripheral sector of the complex.

The protein localises to the cell inner membrane. The catalysed reaction is a quinone + NADH + 5 H(+)(in) = a quinol + NAD(+) + 4 H(+)(out). Functionally, NDH-1 shuttles electrons from NADH, via FMN and iron-sulfur (Fe-S) centers, to quinones in the respiratory chain. The immediate electron acceptor for the enzyme in this species is believed to be ubiquinone. Couples the redox reaction to proton translocation (for every two electrons transferred, four hydrogen ions are translocated across the cytoplasmic membrane), and thus conserves the redox energy in a proton gradient. The polypeptide is NADH-quinone oxidoreductase subunit D (Ehrlichia ruminantium (strain Welgevonden)).